The primary structure comprises 549 residues: Cilia- and flagella-associated protein 45 (549 aa).

The disordered stretch occupies residues 1-29 (MPLSPAGVLSSTSTASNRSRNRPRYRTKA). Coiled coils occupy residues 119-232 (REEL…MMEV), 259-393 (IVEQ…KRNQ), and 434-522 (AVQV…KIEE). The segment at 388-416 (RAKRNQEVADREWRRKEKENAQKKMETEA) is disordered.

The protein belongs to the CFAP45 family. Microtubule inner protein component of sperm flagellar doublet microtubules. Interacts with AK8; dimerization with AK8 may create a cavity at the interface of the dimer that can accommodate AMP. Interacts with CFAP52. Interacts with ENKUR. Directly interacts with DNALI1. Interacts with DNAH11. Interacts with DNAI1. In terms of tissue distribution, expressed in respiratory cells (at protein level).

Its subcellular location is the cytoplasm. The protein resides in the cytoskeleton. It is found in the cilium axoneme. It localises to the flagellum axoneme. The protein localises to the cell projection. Its subcellular location is the cilium. The protein resides in the flagellum. Functionally, microtubule inner protein (MIP) part of the dynein-decorated doublet microtubules (DMTs) in cilia axoneme, which is required for motile cilia beating. It is an AMP-binding protein that may facilitate dynein ATPase-dependent ciliary and flagellar beating via adenine nucleotide homeostasis. May function as a donor of AMP to AK8 and hence promote ADP production. This Sus scrofa (Pig) protein is Cilia- and flagella-associated protein 45 (CFAP45).